The primary structure comprises 637 residues: Protein RRP6-like 1 (637 aa).

A 3'-5' exonuclease domain is found at 118 to 283 (VEEVKDLEDL…YIYDVMRMEL (166 aa)). The HRDC domain occupies 334 to 414 (NAVQLSIVAG…RRSMQNAAAF (81 aa)). The span at 553–565 (VDDDDDDDDDESY) shows a compositional bias: acidic residues. The segment at 553-624 (VDDDDDDDDD…EDMRRRSEKH (72 aa)) is disordered. Over residues 580 to 598 (ETPSKGSPSLTQKPKTCNT) the composition is skewed to polar residues. Over residues 602–614 (VLDDDDDSESRED) the composition is skewed to acidic residues.

The protein localises to the nucleus. The protein resides in the nucleoplasm. Functionally, acts as an important epigenetic regulator through multiple silencing mechanisms. Involved in transcriptional gene silencing (TGS). Plays a role for DNA methylation in the RNA-directed DNA methylation (RdDM) pathway. Contributes to the methylation status of the retrotransposon SN1. Required for DNA methylation only at a subset of RdDM target loci. Plays a regulatory role in RdDM through retention of non-coding RNAs (ncRNAs) in normal cells. Helps to retain Pol V-transcribed RNAs in chromatin to enable their scaffold function and is required for genome-wide Pol IV-dependent siRNA (24 nt siRNA) production that may involve retention of Pol IV transcripts. Involved in association with RRP6L2 in the silencing of the solo LTR locus. Controls levels of ncRNAs from the solo LTR locus. Seems to function independently of the RdDM pathway. Functions redundantly with RRP6L2 in the regulation of FLC locus. Participates in the maintenance of trimethylated 'Lys-27' (H3K27me3) at FLC locus via the regulation of antisense long non-coding RNAs (lncRNAs) and the regulation of diverse antisense RNAs derived from the FLC locus. Seems not involved in the exosomal RNA degradation. Can complement the growth defect of a yeast mutant lacking RRP6 exonuclease. The protein is Protein RRP6-like 1 of Arabidopsis thaliana (Mouse-ear cress).